The sequence spans 348 residues: dTDP-glucose 4,6-dehydratase (348 aa).

NAD(+) is bound by residues F15–I16, D37–T40, D62–I63, and Y82–S86. Residues S86 and N88 each coordinate substrate. T101 contributes to the NAD(+) binding site. Residue T125 coordinates substrate. D126 acts as the Proton donor in catalysis. Active-site proton acceptor residues include E127 and Y161. Position 161–165 (Y161–K165) interacts with NAD(+). N190 provides a ligand contact to substrate. Position 191 (N191) interacts with NAD(+). Residues K200–Q205, K216–Y218, R225, N260, and D283–H287 each bind substrate.

Belongs to the NAD(P)-dependent epimerase/dehydratase family. dTDP-glucose dehydratase subfamily. As to quaternary structure, homodimer. NAD(+) serves as cofactor.

It catalyses the reaction dTDP-alpha-D-glucose = dTDP-4-dehydro-6-deoxy-alpha-D-glucose + H2O. It functions in the pathway carbohydrate biosynthesis; dTDP-L-rhamnose biosynthesis. In terms of biological role, catalyzes the dehydration of dTDP-D-glucose to form dTDP-6-deoxy-D-xylo-4-hexulose via a three-step process involving oxidation, dehydration and reduction. The sequence is that of dTDP-glucose 4,6-dehydratase (rmlB) from Streptococcus mutans serotype c (strain ATCC 700610 / UA159).